An 874-amino-acid polypeptide reads, in one-letter code: Alanine--tRNA ligase (874 aa).

Residues H562, H566, C665, and H669 each coordinate Zn(2+).

The protein belongs to the class-II aminoacyl-tRNA synthetase family. The cofactor is Zn(2+).

The protein localises to the cytoplasm. It catalyses the reaction tRNA(Ala) + L-alanine + ATP = L-alanyl-tRNA(Ala) + AMP + diphosphate. Its function is as follows. Catalyzes the attachment of alanine to tRNA(Ala) in a two-step reaction: alanine is first activated by ATP to form Ala-AMP and then transferred to the acceptor end of tRNA(Ala). Also edits incorrectly charged Ser-tRNA(Ala) and Gly-tRNA(Ala) via its editing domain. This chain is Alanine--tRNA ligase, found in Pseudomonas aeruginosa (strain ATCC 15692 / DSM 22644 / CIP 104116 / JCM 14847 / LMG 12228 / 1C / PRS 101 / PAO1).